The primary structure comprises 291 residues: Exosome complex exonuclease RRP42 (291 aa).

A2 is subject to N-acetylalanine. K116 carries the N6-acetyllysine modification.

The protein belongs to the RNase PH family. As to quaternary structure, component of the RNA exosome core complex (Exo-9), composed of EXOSC1, EXOSC2, EXOSC3, EXOSC4, EXOSC5, EXOSC6, EXOSC7, EXOSC8 and EXOSC9; within the complex interacts with EXOSC2 and EXOSC4. The catalytically inactive RNA exosome core complex (Exo-9) associates with the catalytic subunit EXOSC10/RRP6. Exo-9 may associate with DIS3 to form the nucleolar exosome complex, or DIS3L to form the cytoplasmic exosome complex. Exo-9 is formed by a hexameric base ring consisting of the heterodimers EXOSC4-EXOSC9, EXOSC5-EXOSC8 and EXOSC6-EXOSC7, and a cap ring consisting of EXOSC1, EXOSC2 and EXOSC3. The RNA exosome complex associates with cofactors C1D/RRP47, MPHOSPH6/MPP6 and MTREX/MTR4. Interacts with ZC3HAV1. Interacts with DIS3; the interaction is direct.

It is found in the nucleus. The protein localises to the nucleolus. It localises to the cytoplasm. Non-catalytic component of the RNA exosome complex which has 3'-&gt;5' exoribonuclease activity and participates in a multitude of cellular RNA processing and degradation events. In the nucleus, the RNA exosome complex is involved in proper maturation of stable RNA species such as rRNA, snRNA and snoRNA, in the elimination of RNA processing by-products and non-coding 'pervasive' transcripts, such as antisense RNA species and promoter-upstream transcripts (PROMPTs), and of mRNAs with processing defects, thereby limiting or excluding their export to the cytoplasm. The RNA exosome may be involved in Ig class switch recombination (CSR) and/or Ig variable region somatic hypermutation (SHM) by targeting AICDA deamination activity to transcribed dsDNA substrates. In the cytoplasm, the RNA exosome complex is involved in general mRNA turnover and specifically degrades inherently unstable mRNAs containing AU-rich elements (AREs) within their 3' untranslated regions, and in RNA surveillance pathways, preventing translation of aberrant mRNAs. It seems to be involved in degradation of histone mRNA. The catalytic inactive RNA exosome core complex of 9 subunits (Exo-9) is proposed to play a pivotal role in the binding and presentation of RNA for ribonucleolysis, and to serve as a scaffold for the association with catalytic subunits and accessory proteins or complexes. In Mus musculus (Mouse), this protein is Exosome complex exonuclease RRP42 (Exosc7).